The following is a 393-amino-acid chain: S-adenosylmethionine synthase (393 aa).

ATP is bound at residue H16. Position 18 (D18) interacts with Mg(2+). E44 is a K(+) binding site. 2 residues coordinate L-methionine: E57 and Q100. A flexible loop region spans residues 100-110 (QSNDIAQGVDH). ATP-binding positions include 167-169 (DAK), 238-239 (RF), D247, 253-254 (RK), A270, and K274. Residue D247 coordinates L-methionine. Position 278 (K278) interacts with L-methionine.

The protein belongs to the AdoMet synthase family. As to quaternary structure, homotetramer; dimer of dimers. Mg(2+) serves as cofactor. It depends on K(+) as a cofactor.

The protein localises to the cytoplasm. The enzyme catalyses L-methionine + ATP + H2O = S-adenosyl-L-methionine + phosphate + diphosphate. It functions in the pathway amino-acid biosynthesis; S-adenosyl-L-methionine biosynthesis; S-adenosyl-L-methionine from L-methionine: step 1/1. Its function is as follows. Catalyzes the formation of S-adenosylmethionine (AdoMet) from methionine and ATP. The overall synthetic reaction is composed of two sequential steps, AdoMet formation and the subsequent tripolyphosphate hydrolysis which occurs prior to release of AdoMet from the enzyme. In Acidovorax sp. (strain JS42), this protein is S-adenosylmethionine synthase.